A 264-amino-acid chain; its full sequence is Probable pectate lyase D (264 aa).

An N-terminal signal peptide occupies residues 1–17 (MFFKQLAVLSFATSALA). Asparagine 60 carries N-linked (GlcNAc...) asparagine glycosylation. Positions 234-264 (YEGTDNNDEEPQEISTGPSNACQYTDPLPSC) are disordered. The segment covering 235 to 245 (EGTDNNDEEPQ) has biased composition (acidic residues). Polar residues predominate over residues 246-256 (EISTGPSNACQ).

It belongs to the polysaccharide lyase 3 family. It depends on Ca(2+) as a cofactor.

The protein resides in the secreted. The catalysed reaction is Eliminative cleavage of (1-&gt;4)-alpha-D-galacturonan to give oligosaccharides with 4-deoxy-alpha-D-galact-4-enuronosyl groups at their non-reducing ends.. Functionally, pectinolytic enzyme consist of four classes of enzymes: pectin lyase, polygalacturonase, pectin methylesterase and rhamnogalacturonase. Among pectinolytic enzymes, pectin lyase is the most important in depolymerization of pectin, since it cleaves internal glycosidic bonds of highly methylated pectins. Favors pectate, the anion, over pectin, the methyl ester. This is Probable pectate lyase D (plyD) from Emericella nidulans (strain FGSC A4 / ATCC 38163 / CBS 112.46 / NRRL 194 / M139) (Aspergillus nidulans).